We begin with the raw amino-acid sequence, 523 residues long: 2-isopropylmalate synthase (523 aa).

Residues 5-267 enclose the Pyruvate carboxyltransferase domain; the sequence is VVIFDTTLRD…QTRINHNEIW (263 aa). 4 residues coordinate Mn(2+): Asp14, His202, His204, and Asn238. The interval 392–523 is regulatory domain; sequence RMDYFSVQSG…QNKENNKETV (132 aa).

The protein belongs to the alpha-IPM synthase/homocitrate synthase family. LeuA type 1 subfamily. Homodimer. Requires Mn(2+) as cofactor.

The protein localises to the cytoplasm. It catalyses the reaction 3-methyl-2-oxobutanoate + acetyl-CoA + H2O = (2S)-2-isopropylmalate + CoA + H(+). It functions in the pathway amino-acid biosynthesis; L-leucine biosynthesis; L-leucine from 3-methyl-2-oxobutanoate: step 1/4. Catalyzes the condensation of the acetyl group of acetyl-CoA with 3-methyl-2-oxobutanoate (2-ketoisovalerate) to form 3-carboxy-3-hydroxy-4-methylpentanoate (2-isopropylmalate). In Enterobacter sp. (strain 638), this protein is 2-isopropylmalate synthase.